Consider the following 150-residue polypeptide: Ribonuclease H (150 aa).

The region spanning Met1–Ile141 is the RNase H type-1 domain. 4 residues coordinate Mg(2+): Asp9, Glu47, Asp69, and Asp133.

It belongs to the RNase H family. In terms of assembly, monomer. The cofactor is Mg(2+).

The protein localises to the cytoplasm. The enzyme catalyses Endonucleolytic cleavage to 5'-phosphomonoester.. Its function is as follows. Endonuclease that specifically degrades the RNA of RNA-DNA hybrids. The protein is Ribonuclease H of Xanthomonas campestris pv. campestris (strain 8004).